A 440-amino-acid chain; its full sequence is MLLSPKFSLSTIHVRLTAKGLLRNLRLPSGLRKNTVIFHTVEKGRQKNPRSLCIQTQTAPDVLSTERTLELADYKTKCENQSGFILHLKQLLSCGNTKFEALTVVIQHLLSEREEALKQHKTLSQELVSLRGELVAASSTCEKLEKARNDLQTAYEGFVQKLNQQHQTDQTELENRLKEFYTAECEKLQSIYIEEAEKYKTQLQEQFDNLNAAHETTKLEIEASHSEKVELLKKTYETSLSEIKKSHEMEKKLLENLLNEKQESLEKQINDLKSENDALNERLKSEEQKQLSREKANSKNPQVMYLEQELESLKAVLEIKNEKLHQQDLKLMKMEKLVDNNTTLVDKLTRFQQENEELKARMDRHMAISRQLSTEQAALQESLEKESKVNKRLSMENEELLWKLHNGDLCSPKRSPTSSAIPFQSPRNSGSFSSPSISPR.

Residues 106–401 are a coiled coil; sequence IQHLLSEREE…RLSMENEELL (296 aa). Serine 373, serine 394, serine 415, serine 425, serine 429, serine 431, serine 433, serine 434, and serine 438 each carry phosphoserine. Residues 407-440 are disordered; sequence GDLCSPKRSPTSSAIPFQSPRNSGSFSSPSISPR. Over residues 425 to 440 the composition is skewed to low complexity; the sequence is SPRNSGSFSSPSISPR.

It belongs to the MTUS1 family. Homodimer. Interacts with AGTR2. Interacts with PTPN6. Present in neurons (at protein level).

The protein resides in the mitochondrion. It localises to the golgi apparatus. It is found in the cell membrane. The protein localises to the nucleus. In terms of biological role, cooperates with AGTR2 to inhibit ERK2 activation and cell proliferation. May be required for AGTR2 cell surface expression. Together with PTPN6, induces UBE2V2 expression upon angiotensin-II stimulation. This is Microtubule-associated tumor suppressor 1 homolog (Mtus1) from Rattus norvegicus (Rat).